Consider the following 928-residue polypeptide: Dual serine/threonine and tyrosine protein kinase (928 aa).

Residues 1–14 (MEGDGVPWGSEPES) show a composition bias toward low complexity. Disordered stretches follow at residues 1 to 22 (MEGDGVPWGSEPESGPGPGGGG) and 55 to 81 (LRGSQPRGCPSSPAEGGEAGRGPAGDV). Positions 394 to 430 (RKKENELYESLMNIANRKQEEMKDMIVETLNTMKEEL) form a coiled coil. The region spanning 651 to 905 (PKLGQELGRG…PLLGIVQPML (255 aa)) is the Protein kinase domain. Residues 657 to 665 (LGRGQYGVV) and Lys-680 contribute to the ATP site. The active-site Proton acceptor is Asp-776.

Belongs to the protein kinase superfamily. Ser/Thr protein kinase family.

The protein resides in the cytoplasm. Its subcellular location is the cell membrane. It is found in the apical cell membrane. The protein localises to the basolateral cell membrane. It localises to the cell junction. The catalysed reaction is L-seryl-[protein] + ATP = O-phospho-L-seryl-[protein] + ADP + H(+). It carries out the reaction L-threonyl-[protein] + ATP = O-phospho-L-threonyl-[protein] + ADP + H(+). The enzyme catalyses L-tyrosyl-[protein] + ATP = O-phospho-L-tyrosyl-[protein] + ADP + H(+). In terms of biological role, acts as a positive regulator of ERK phosphorylation downstream of fibroblast growth factor-receptor activation. Involved in the regulation of both caspase-dependent apoptosis and caspase-independent cell death. In the skin, it plays a predominant role in suppressing caspase-dependent apoptosis in response to UV stress in a range of dermal cell types. This is Dual serine/threonine and tyrosine protein kinase (DSTYK) from Bos taurus (Bovine).